Consider the following 349-residue polypeptide: GMP reductase (349 aa).

Residue Leu-108–Ala-131 participates in NADP(+) binding. Gly-181 and Gly-183 together coordinate K(+). The active-site Thioimidate intermediate is Cys-186. Ile-216 to Val-239 provides a ligand contact to NADP(+).

This sequence belongs to the IMPDH/GMPR family. GuaC type 1 subfamily. Homotetramer.

The enzyme catalyses IMP + NH4(+) + NADP(+) = GMP + NADPH + 2 H(+). Functionally, catalyzes the irreversible NADPH-dependent deamination of GMP to IMP. It functions in the conversion of nucleobase, nucleoside and nucleotide derivatives of G to A nucleotides, and in maintaining the intracellular balance of A and G nucleotides. This chain is GMP reductase, found in Buchnera aphidicola subsp. Schizaphis graminum (strain Sg).